The following is a 212-amino-acid chain: Ribosomal RNA small subunit methyltransferase G (212 aa).

Residues Phe78, 96–98 (ESS), 124–125 (VE), and Arg141 each bind S-adenosyl-L-methionine.

It belongs to the methyltransferase superfamily. RNA methyltransferase RsmG family.

Its subcellular location is the cytoplasm. Specifically methylates the N7 position of a guanine in 16S rRNA. This Onion yellows phytoplasma (strain OY-M) protein is Ribosomal RNA small subunit methyltransferase G.